Consider the following 817-residue polypeptide: Cargo-transport protein YPP1 (817 aa).

It belongs to the YPP1 family. As to quaternary structure, interacts with ribosomes.

The protein localises to the cytoplasmic granule. The protein resides in the cell membrane. Functionally, involved in endocytosis. The sequence is that of Cargo-transport protein YPP1 (YPP1) from Saccharomyces cerevisiae (strain ATCC 204508 / S288c) (Baker's yeast).